Reading from the N-terminus, the 499-residue chain is Glycerol kinase (499 aa).

ADP is bound at residue Thr17. Positions 17, 18, and 19 each coordinate ATP. Thr17 serves as a coordination point for sn-glycerol 3-phosphate. Arg21 is a binding site for ADP. Sn-glycerol 3-phosphate is bound by residues Arg87, Glu88, Tyr139, and Asp243. 5 residues coordinate glycerol: Arg87, Glu88, Tyr139, Asp243, and Gln244. ADP contacts are provided by Thr265 and Gly308. The ATP site is built by Thr265, Gly308, Gln312, and Gly409. ADP-binding residues include Gly409 and Asn413.

The protein belongs to the FGGY kinase family.

It carries out the reaction glycerol + ATP = sn-glycerol 3-phosphate + ADP + H(+). The protein operates within polyol metabolism; glycerol degradation via glycerol kinase pathway; sn-glycerol 3-phosphate from glycerol: step 1/1. With respect to regulation, inhibited by fructose 1,6-bisphosphate (FBP). Key enzyme in the regulation of glycerol uptake and metabolism. Catalyzes the phosphorylation of glycerol to yield sn-glycerol 3-phosphate. The chain is Glycerol kinase from Pseudomonas putida (strain GB-1).